Reading from the N-terminus, the 76-residue chain is Small ribosomal subunit protein bS18 (76 aa).

It belongs to the bacterial ribosomal protein bS18 family. As to quaternary structure, part of the 30S ribosomal subunit. Forms a tight heterodimer with protein bS6.

Its function is as follows. Binds as a heterodimer with protein bS6 to the central domain of the 16S rRNA, where it helps stabilize the platform of the 30S subunit. This chain is Small ribosomal subunit protein bS18, found in Stenotrophomonas maltophilia (strain R551-3).